A 63-amino-acid chain; its full sequence is Lantipeptide Flvbeta.a (63 aa).

A propeptide spans 1-28 (MSEKNMEKAGVVKADELDEMIDETTGGA) (cleaved by FlvT). 4 positions are modified to 2,3-didehydrobutyrine; by FlvM2: threonine 30, threonine 33, threonine 38, and threonine 39. Residues 43 to 49 (SKGLQNC) constitute a cross-link (lanthionine (Ser-Cys); by FlvM2). Residues threonine 54 and threonine 55 each carry the 2,3-didehydrobutyrine; by FlvM2 modification.

Post-translationally, maturation of FlvA2 peptides involves the enzymatic conversion of Thr, and Ser into dehydrated AA and the formation of thioether bonds with cysteines. Modifications are processed by the flavecin synthetase FlvM2. This is followed by membrane translocation and cleavage of the modified precursor. Contains DL-lanthionine, when coepressed in E.coli with the flavecin synthetase FlvM2.

The protein localises to the secreted. Functionally, lanthionine-containing peptide that does probably not show antibacterial activity, since its analog [+3]Flvbeta.a does not show antibacterial activity against M.luteus. Also does not show antibiotic activity when tested with [Del2]Flvalpha.a, an analog of Flvalpha.a, which is encoded by the same operon than Flvbeta.a. The bactericidal activity of lantibiotics is based on depolarization of energized bacterial cytoplasmic membranes, initiated by the formation of aqueous transmembrane pores. The chain is Lantipeptide Flvbeta.a from Ruminococcus flavefaciens.